Consider the following 410-residue polypeptide: Mating-type locus allele B3 protein (410 aa).

The interval 1–110 (MSRDPKLSLS…ANVVSPGEGC (110 aa)) is variable domain between B alleles. The segment at residues 107–184 (GEGCRNLSED…NARRRSGWSH (78 aa)) is a DNA-binding region (homeobox; TALE-type). A highly conserved between B alleles region spans residues 111 to 410 (RNLSEDLPAY…PFLCLSVAFV (300 aa)). 2 disordered regions span residues 203–224 (AKLS…PSDD) and 278–335 (TPKP…TPEL). Over residues 205-219 (LSSSNQSTPPSLTSE) the composition is skewed to polar residues. The Nuclear localization signal signature appears at 276–308 (KKTPKPGMPRPVTTVAKRHPARKTKPAAKPKSR). Over residues 291-307 (AKRHPARKTKPAAKPKS) the composition is skewed to basic residues. Positions 312-335 (PRASTTPSIDSTLDSSKLESTPEL) are enriched in polar residues. The tract at residues 333–410 (PELSMCSTAD…PFLCLSVAFV (78 aa)) is not essential for B3 function.

This sequence belongs to the TALE/M-ATYP homeobox family.

The protein localises to the nucleus. Functionally, the B locus has at least 25 alleles, and any combination of two different B alleles yields a multimeric regulatory protein, that activates genes responsible for the pathogenicity and for the sexual development of the fungus within the corn plant. This Mycosarcoma maydis (Corn smut fungus) protein is Mating-type locus allele B3 protein.